Here is a 208-residue protein sequence, read N- to C-terminus: uncharacterized protein (208 aa).

A run of 6 helical transmembrane segments spans residues 35-55 (LLLL…SYLV), 76-96 (LMYA…YFAS), 102-122 (FFWP…AIIW), 132-152 (ICTF…LWFF), 156-176 (APAL…FVWL), and 188-208 (NAIA…SLYL).

The protein belongs to the TMEM86 family.

The protein localises to the cell membrane. This is an uncharacterized protein from Escherichia coli O157:H7.